A 507-amino-acid chain; its full sequence is Efflux pump ustT (507 aa).

A run of 11 helical transmembrane segments spans residues 59-79 (IAVVASLTFLITDIAGQIIVA), 146-166 (LLIAMVGCLLSDIWVGVVTWF), 180-200 (IWQLIGGGGASISSMAFAMIA), 216-236 (HAAVLVAELVSVPAGAALANF), 240-260 (IPVFGAAIFMVLGILFAYVVV), 316-336 (VLLIMASFFVCQLGRMISGIT), 359-379 (AGVNLFVLAAIIPALSYILVK), 398-418 (VCLIIGSFVMFLAASPGTLVF), 421-441 (TVFALGFAFSVTARSFLTGMV), 449-469 (VFTGVTTMLYGGLVIGSPMLA), and 481-501 (IWVGLPFLLAAVLFTLALGAI).

The protein belongs to the major facilitator superfamily.

Its subcellular location is the cell membrane. It functions in the pathway mycotoxin biosynthesis. Functionally, efflux pump; part of the gene cluster that mediates the biosynthesis of the secondary metabolite ustiloxin B, an antimitotic tetrapeptide. Probably involved in self-resistance through the export of ustiloxin B. The polypeptide is Efflux pump ustT (Aspergillus flavus (strain ATCC 200026 / FGSC A1120 / IAM 13836 / NRRL 3357 / JCM 12722 / SRRC 167)).